Here is a 308-residue protein sequence, read N- to C-terminus: N-acetylmuramic acid 6-phosphate etherase (308 aa).

An SIS domain is found at 63-226 (IVDAFACGGR…STASMIRSGK (164 aa)). Glutamate 91 acts as the Proton donor in catalysis. Glutamate 122 is a catalytic residue.

Belongs to the GCKR-like family. MurNAc-6-P etherase subfamily. In terms of assembly, homodimer.

It catalyses the reaction N-acetyl-D-muramate 6-phosphate + H2O = N-acetyl-D-glucosamine 6-phosphate + (R)-lactate. Its pathway is amino-sugar metabolism; 1,6-anhydro-N-acetylmuramate degradation. It functions in the pathway amino-sugar metabolism; N-acetylmuramate degradation. The protein operates within cell wall biogenesis; peptidoglycan recycling. In terms of biological role, specifically catalyzes the cleavage of the D-lactyl ether substituent of MurNAc 6-phosphate, producing GlcNAc 6-phosphate and D-lactate. Together with AnmK, is also required for the utilization of anhydro-N-acetylmuramic acid (anhMurNAc) either imported from the medium or derived from its own cell wall murein, and thus plays a role in cell wall recycling. The chain is N-acetylmuramic acid 6-phosphate etherase from Colwellia psychrerythraea (strain 34H / ATCC BAA-681) (Vibrio psychroerythus).